The chain runs to 595 residues: Metacaspase-1 (595 aa).

Active-site residues include His-411 and Cys-466.

The protein belongs to the peptidase C14B family. As to quaternary structure, monomer.

Activated by Ca(2+). Cysteine protease that cleaves specifically after arginine or lysine residues. The sequence is that of Metacaspase-1 from Plasmodium berghei (strain Anka).